The primary structure comprises 348 residues: Noscapine synthase SDR1 (348 aa).

Belongs to the NAD(P)-dependent epimerase/dehydratase family.

It catalyses the reaction narcotine hemiacetal + NAD(+) = noscapine + NADH + H(+). It participates in alkaloid biosynthesis. In terms of biological role, oxidoreductase that catalyzes the last step in the biosynthesis of the benzylisoquinoline alkaloid noscapine. Converts narcotine hemiacetal to noscapine. The polypeptide is Noscapine synthase SDR1 (Papaver somniferum (Opium poppy)).